We begin with the raw amino-acid sequence, 888 residues long: CRISPR-associated endonuclease/helicase Cas3 (888 aa).

Residues 20–231 (KGNDIHLLIY…AGFCSLADWL (212 aa)) enclose the HD Cas3-type domain. The Mg(2+) site is built by aspartate 75 and histidine 160. The Helicase ATP-binding domain occupies 301-504 (DALPVAPGLT…LDTYGLHTDP (204 aa)). An ATP-binding site is contributed by 314-321 (APTGSGKT). The DEAH box motif lies at 452–455 (DEVH). In terms of domain architecture, Helicase C-terminal spans 556–735 (MLERMIAAAN…AYRQWLDSIY (180 aa)).

The protein in the N-terminal section; belongs to the CRISPR-associated nuclease Cas3-HD family. In the central section; belongs to the CRISPR-associated helicase Cas3 family. In terms of assembly, interacts with the CasA subunit of Cascade once Cascade has recognized target DNA. It depends on Mg(2+) as a cofactor.

CRISPR (clustered regularly interspaced short palindromic repeat), is an adaptive immune system that provides protection against mobile genetic elements (viruses, transposable elements and conjugative plasmids). CRISPR clusters contain sequences complementary to antecedent mobile elements and target invading nucleic acids. CRISPR clusters are transcribed and processed into CRISPR RNA (crRNA). Cas3 plus Cascade participate in CRISPR interference, the third stage of CRISPR immunity. Its function is as follows. Acts as an endonuclease, a 3'-5'exonuclease, and an ATP-dependent dsDNA helicase. Anneals and unwinds R-loops (in which crRNA binds the target DNA, displacing the noncomplementary strand). Unwinding requires ATP, annealing does not. Required along with the Cascade complex for resistance to bacteriophage lambda infection as well as the ability to cure CRISPR-encoding high-copy number plasmid. A Cas3-CasA fusion protein purified with the Cascade complex nicks target plasmid in the presence but not absence of Mg(2+), and degrades plasmid fully in the presence of Mg(2+) and ATP, suggesting the helicase activity is required for complete degradation. This Escherichia coli (strain K12) protein is CRISPR-associated endonuclease/helicase Cas3 (ygcB).